The sequence spans 249 residues: Cilia- and flagella-associated protein 410 (249 aa).

LRR repeat units follow at residues 19 to 40, 41 to 62, and 63 to 84; these read NVRK…REMP, SLEV…RSCR, and RLSE…FYLK. An LRRCT domain is found at 97-137; it reads NPCCGTSPHLYRMTVLRNLPHLQKLDNQAVTEEELTRALME. The segment at 146 to 203 is disordered; the sequence is HREGAGNGCPKPPYALNSVSSATETSQHLLSYTEETEVQGQTTTDQSPSFSPRDTMRS. Over residues 162–175 the composition is skewed to polar residues; the sequence is NSVSSATETSQHLL.

As to quaternary structure, found in a complex with CFAP410, NEK1 and SPATA7. Interacts with NEK1. As to expression, expressed in the retina.

It is found in the cell projection. The protein resides in the cilium. Its subcellular location is the cytoplasm. It localises to the cytoskeleton. The protein localises to the cilium basal body. It is found in the mitochondrion. The protein resides in the photoreceptor outer segment. Its function is as follows. Plays a role in cilia formation and/or maintenance. Plays a role in the regulation of cell morphology and cytoskeletal organization. Involved in DNA damage repair. The protein is Cilia- and flagella-associated protein 410 of Mus musculus (Mouse).